The primary structure comprises 151 residues: Large-conductance mechanosensitive channel (151 aa).

The next 2 helical transmembrane spans lie at 12 to 32 (GNIV…ALVT) and 71 to 91 (VLLS…FLVV). The interval 122 to 151 (AQTNGDSPGRHGGRGTPSPTDGPLASTESQ) is disordered.

Belongs to the MscL family. Homopentamer.

It localises to the cell membrane. In terms of biological role, channel that opens in response to stretch forces in the membrane lipid bilayer. May participate in the regulation of osmotic pressure changes within the cell. The chain is Large-conductance mechanosensitive channel from Mycobacterium bovis (strain BCG / Pasteur 1173P2).